A 298-amino-acid polypeptide reads, in one-letter code: Lipoyl synthase 1 (298 aa).

Cys-34, Cys-39, Cys-45, Cys-60, Cys-64, Cys-67, and Ser-274 together coordinate [4Fe-4S] cluster. In terms of domain architecture, Radical SAM core spans 46-263; that stretch reads FYQGTATFLM…RRLGESMGFL (218 aa).

Belongs to the radical SAM superfamily. Lipoyl synthase family. [4Fe-4S] cluster is required as a cofactor.

The protein resides in the cytoplasm. It catalyses the reaction [[Fe-S] cluster scaffold protein carrying a second [4Fe-4S](2+) cluster] + N(6)-octanoyl-L-lysyl-[protein] + 2 oxidized [2Fe-2S]-[ferredoxin] + 2 S-adenosyl-L-methionine + 4 H(+) = [[Fe-S] cluster scaffold protein] + N(6)-[(R)-dihydrolipoyl]-L-lysyl-[protein] + 4 Fe(3+) + 2 hydrogen sulfide + 2 5'-deoxyadenosine + 2 L-methionine + 2 reduced [2Fe-2S]-[ferredoxin]. The protein operates within protein modification; protein lipoylation via endogenous pathway; protein N(6)-(lipoyl)lysine from octanoyl-[acyl-carrier-protein]: step 2/2. Functionally, catalyzes the radical-mediated insertion of two sulfur atoms into the C-6 and C-8 positions of the octanoyl moiety bound to the lipoyl domains of lipoate-dependent enzymes, thereby converting the octanoylated domains into lipoylated derivatives. This chain is Lipoyl synthase 1, found in Thermosynechococcus vestitus (strain NIES-2133 / IAM M-273 / BP-1).